The following is a 21-amino-acid chain: Granule-bound starch synthase 1 (21 aa).

Belongs to the glycosyltransferase 1 family. Bacterial/plant glycogen synthase subfamily.

It localises to the plastid. Its subcellular location is the chloroplast. The protein resides in the amyloplast. The catalysed reaction is an NDP-alpha-D-glucose + [(1-&gt;4)-alpha-D-glucosyl](n) = [(1-&gt;4)-alpha-D-glucosyl](n+1) + a ribonucleoside 5'-diphosphate + H(+). It functions in the pathway glycan biosynthesis; starch biosynthesis. The sequence is that of Granule-bound starch synthase 1 from Secale cereale (Rye).